The chain runs to 187 residues: MKRIVVGITGASGTIYAVDLLEKLHQRPDVEVHLVMSAWAKKNLELETDYSLAQLTALADATYRANDQGAAIASGSFLNDGMVIVPASMKTVAGIAYGFGDNLISRAADVTIKEQRKLVIVPRETPLSVIHLENLTKLAKLGAQIIPPIPAFYNHPQSIQDLVNHQTMKILDAFHIHNETDRRWEGD.

Residues 10 to 12, Ser-37, 88 to 91, and Arg-123 each bind FMN; these read GAS and SMKT. Residues Tyr-153 and Lys-169 each coordinate dimethylallyl phosphate.

Belongs to the UbiX/PAD1 family.

It carries out the reaction dimethylallyl phosphate + FMNH2 = prenylated FMNH2 + phosphate. Its function is as follows. Involved in tannin degradation. Flavin prenyltransferase that catalyzes the synthesis of the prenylated FMN cofactor (prenyl-FMN) for gallate decarboxylase LpdC. The prenyltransferase is metal-independent and links a dimethylallyl moiety from dimethylallyl monophosphate (DMAP) to the flavin N5 and C6 atoms of FMN. This Lactiplantibacillus plantarum (strain ATCC BAA-793 / NCIMB 8826 / WCFS1) (Lactobacillus plantarum) protein is Flavin prenyltransferase LpdB.